Consider the following 158-residue polypeptide: MATLPITKRGAEKLKAELHNLKTVQRPWVINAISEARAQGDLSENAEYEVAKDRQGFIEGRIQEIEGKLSAAQVIDPTTFETGTRVVFGSTVKLEDEATGDSVTYQIVGEDEADIKLGLVNIGSPIARALIGKDEGDSAEVQAPGGIRRYEIVTVLYI.

It belongs to the GreA/GreB family.

Functionally, necessary for efficient RNA polymerase transcription elongation past template-encoded arresting sites. The arresting sites in DNA have the property of trapping a certain fraction of elongating RNA polymerases that pass through, resulting in locked ternary complexes. Cleavage of the nascent transcript by cleavage factors such as GreA or GreB allows the resumption of elongation from the new 3'terminus. GreA releases sequences of 2 to 3 nucleotides. This chain is Transcription elongation factor GreA, found in Polaromonas naphthalenivorans (strain CJ2).